The chain runs to 513 residues: ATP synthase subunit alpha 2 (513 aa).

Position 169 to 176 (glycine 169 to threonine 176) interacts with ATP.

The protein belongs to the ATPase alpha/beta chains family. As to quaternary structure, F-type ATPases have 2 components, CF(1) - the catalytic core - and CF(0) - the membrane proton channel. CF(1) has five subunits: alpha(3), beta(3), gamma(1), delta(1), epsilon(1). CF(0) has three main subunits: a(1), b(2) and c(9-12). The alpha and beta chains form an alternating ring which encloses part of the gamma chain. CF(1) is attached to CF(0) by a central stalk formed by the gamma and epsilon chains, while a peripheral stalk is formed by the delta and b chains.

It localises to the cell inner membrane. The enzyme catalyses ATP + H2O + 4 H(+)(in) = ADP + phosphate + 5 H(+)(out). Functionally, produces ATP from ADP in the presence of a proton gradient across the membrane. The alpha chain is a regulatory subunit. This Shewanella frigidimarina (strain NCIMB 400) protein is ATP synthase subunit alpha 2.